A 282-amino-acid chain; its full sequence is D-alanine aminotransferase (282 aa).

Tyrosine 32 is a binding site for substrate. Arginine 51 contributes to the pyridoxal 5'-phosphate binding site. Substrate-binding residues include arginine 99 and histidine 101. Lysine 146 acts as the Proton acceptor in catalysis. An N6-(pyridoxal phosphate)lysine modification is found at lysine 146. Residue glutamate 178 coordinates pyridoxal 5'-phosphate.

The protein belongs to the class-IV pyridoxal-phosphate-dependent aminotransferase family. Homodimer. Pyridoxal 5'-phosphate serves as cofactor.

The catalysed reaction is D-alanine + 2-oxoglutarate = D-glutamate + pyruvate. Acts on the D-isomers of alanine, leucine, aspartate, glutamate, aminobutyrate, norvaline and asparagine. The enzyme transfers an amino group from a substrate D-amino acid to the pyridoxal phosphate cofactor to form pyridoxamine and an alpha-keto acid in the first half-reaction. The second half-reaction is the reverse of the first, transferring the amino group from the pyridoxamine to a second alpha-keto acid to form the product D-amino acid via a ping-pong mechanism. This is an important process in the formation of D-alanine and D-glutamate, which are essential bacterial cell wall components. The chain is D-alanine aminotransferase (dat) from Staphylococcus aureus (strain N315).